The primary structure comprises 362 residues: S-adenosylmethionine-dependent nucleotide dehydratase RSAD2 (362 aa).

The tract at residues Glu-47 to Pro-73 is disordered. Positions Asp-64–Pro-73 are enriched in polar residues. A Radical SAM core domain is found at Pro-70–Leu-290. 3 residues coordinate [4Fe-4S] cluster: Cys-84, Cys-88, and Cys-91. At Lys-198 the chain carries N6-acetyllysine. Lys-207 is covalently cross-linked (Glycyl lysine isopeptide (Lys-Gly) (interchain with G-Cter in ubiquitin)).

It belongs to the radical SAM superfamily. RSAD2 family. As to quaternary structure, homodimer. Interacts with IRAK1 and TRAF6. Interacts with FPPS. Interacts with HADHB. Interacts (via C-terminus) with VAPA/VAP33 (via C-terminus). The cofactor is [4Fe-4S] cluster. Post-translationally, acetylated by HAT1. HAT1-mediated acetylation of Lys-198 in turn recruits UBE4A that stimulates RSAD2 polyubiquitination leading to proteasomal degradation. 'Lys-6'-linked polyubiquitination at Lys-207 leads to RSAD2 protein degradation. In terms of tissue distribution, expressed at higher levels in atherosclerotic arteries than in normal arteries.

The protein resides in the endoplasmic reticulum membrane. It is found in the golgi apparatus. Its subcellular location is the endoplasmic reticulum. The protein localises to the lipid droplet. It localises to the mitochondrion. The protein resides in the mitochondrion inner membrane. It is found in the mitochondrion outer membrane. It catalyses the reaction CTP + AH2 + S-adenosyl-L-methionine = 3'-deoxy-3',4'-didehydro-CTP + 5'-deoxyadenosine + L-methionine + A + H2O + H(+). IRAK1 and TRAF6 synergistically activate RSAD2 increasing its activity with CTP as substrate about 10-fold. Functionally, interferon-inducible antiviral protein which plays a major role in the cell antiviral state induced by type I and type II interferon. Catalyzes the conversion of cytidine triphosphate (CTP) to 3'-deoxy-3',4'-didehydro-CTP (ddhCTP) via a SAM-dependent radical mechanism. In turn, ddhCTP acts as a chain terminator for the RNA-dependent RNA polymerases from multiple viruses and directly inhibits viral replication. Therefore, inhibits a wide range of DNA and RNA viruses. Also promotes TLR7 and TLR9-dependent production of IFN-beta production in plasmacytoid dendritic cells (pDCs) by facilitating 'Lys-63'-linked ubiquitination of IRAK1 by TRAF6. Plays a role in CD4+ T-cells activation and differentiation. Facilitates T-cell receptor (TCR)-mediated GATA3 activation and optimal T-helper 2 (Th2) cytokine production by modulating NFKB1 and JUNB activities. Can inhibit secretion of soluble proteins. This Mus musculus (Mouse) protein is S-adenosylmethionine-dependent nucleotide dehydratase RSAD2.